The chain runs to 345 residues: High mobility group protein 20A (345 aa).

Disordered stretches follow at residues 1–130 (MEST…PFPE) and 166–206 (QKYQ…EKES). 2 stretches are compositionally biased toward polar residues: residues 22–38 (NNQP…SSQA) and 57–67 (LHQSGEQQLGN). Basic residues predominate over residues 80–94 (ARRGGWNKGRKRKRS). A DNA-binding region (HMG box) is located at residues 101–169 (PKAPLTGYVR…RYTKELQKYQ (69 aa)). Positions 112–125 (MNERREQLRTERPD) are enriched in basic and acidic residues. Residues 167–178 (KYQNTDAYQTYS) show a composition bias toward polar residues. Basic residues predominate over residues 179–189 (RKAKSRQKGRQ). Residues 227 to 285 (SKAREAELRQLRKSNMEFEERNAALQKHVESMRSAVQRLEAELSQEHERNSLLQQHLQS) are a coiled coil.

It localises to the nucleus. Plays a role in neuronal differentiation. The protein is High mobility group protein 20A (hmg20a) of Xenopus laevis (African clawed frog).